The primary structure comprises 697 residues: CENP-A multicopy suppressor protein 2 (697 aa).

Residues 351-378 form a GATA-type; atypical zinc finger; that stretch reads CQNCGTIKTANWRNATYMNITLMLCNAC. Positions 443–484 are disordered; the sequence is PLNRLTSLDSTHSAPDPNHISKPSVVNQQKSRGGPRTAKLKN. Polar residues predominate over residues 445–455; sequence NRLTSLDSTHS.

In terms of assembly, interacts with CENP-A.

The protein resides in the nucleus. It is found in the chromosome. It localises to the centromere. Its function is as follows. Required for proper chromosome segregation via regulation of CENP-A localization to the centromere. In Schizosaccharomyces pombe (strain 972 / ATCC 24843) (Fission yeast), this protein is CENP-A multicopy suppressor protein 2 (ams2).